The sequence spans 155 residues: Small ribosomal subunit protein uS7cz/uS7cy (155 aa).

It belongs to the universal ribosomal protein uS7 family. As to quaternary structure, part of the 30S ribosomal subunit.

The protein localises to the plastid. It is found in the chloroplast. In terms of biological role, one of the primary rRNA binding proteins, it binds directly to 16S rRNA where it nucleates assembly of the head domain of the 30S subunit. This chain is Small ribosomal subunit protein uS7cz/uS7cy (rps7-A), found in Nandina domestica (Heavenly bamboo).